The following is an 881-amino-acid chain: DNA mismatch repair protein MutS (881 aa).

612–619 (GPNMAGKS) contributes to the ATP binding site.

The protein belongs to the DNA mismatch repair MutS family.

In terms of biological role, this protein is involved in the repair of mismatches in DNA. It is possible that it carries out the mismatch recognition step. This protein has a weak ATPase activity. The sequence is that of DNA mismatch repair protein MutS from Clostridium tetani (strain Massachusetts / E88).